The primary structure comprises 185 residues: uncharacterized protein (185 aa).

The next 2 membrane-spanning stretches (helical) occupy residues 1–19 (MLNIVLIIGLLAIFNTSSA) and 105–125 (AGFIAQCIIFLFVYTIVTMDV).

Its subcellular location is the membrane. This is an uncharacterized protein from Caenorhabditis elegans.